The following is a 189-amino-acid chain: Interferon alpha-1 (189 aa).

The signal sequence occupies residues Met-1–Gly-23. Intrachain disulfides connect Cys-24/Cys-122 and Cys-52/Cys-162.

Belongs to the alpha/beta interferon family. As to quaternary structure, interacts with CR2.

The protein resides in the secreted. In terms of biological role, produced by macrophages, IFN-alpha have antiviral activities. Interferon stimulates the production of two enzymes: a protein kinase and an oligoadenylate synthetase. The sequence is that of Interferon alpha-1 from Bos taurus (Bovine).